A 425-amino-acid polypeptide reads, in one-letter code: tRNA(Met) cytidine acetate ligase (425 aa).

Residues 7 to 20 (VVEY…HLHH), glycine 102, asparagine 162, and 187 to 188 (RI) each bind ATP.

It belongs to the TmcAL family.

The protein resides in the cytoplasm. It catalyses the reaction cytidine(34) in elongator tRNA(Met) + acetate + ATP = N(4)-acetylcytidine(34) in elongator tRNA(Met) + AMP + diphosphate. Its function is as follows. Catalyzes the formation of N(4)-acetylcytidine (ac(4)C) at the wobble position of elongator tRNA(Met), using acetate and ATP as substrates. First activates an acetate ion to form acetyladenylate (Ac-AMP) and then transfers the acetyl group to tRNA to form ac(4)C34. This is tRNA(Met) cytidine acetate ligase from Fervidobacterium nodosum (strain ATCC 35602 / DSM 5306 / Rt17-B1).